The chain runs to 660 residues: UvrABC system protein B (660 aa).

The Helicase ATP-binding domain occupies 24 to 177; it reads KGFKEGNQFE…DDLARALIDL (154 aa). 37 to 44 contributes to the ATP binding site; it reads GVTGSGKT. A Beta-hairpin motif is present at residues 90-113; that stretch reads YYDYYQPEAYVPQSDTYIAKDSSV. The region spanning 428-594 is the Helicase C-terminal domain; sequence QIDDLVSEVN…TIQKSVRDLI (167 aa). Residues 620 to 655 enclose the UVR domain; sequence EKHIADIEKKMKKAAAELNFEAAAEYRDKLIMLKNT.

The protein belongs to the UvrB family. In terms of assembly, forms a heterotetramer with UvrA during the search for lesions. Interacts with UvrC in an incision complex.

It is found in the cytoplasm. Functionally, the UvrABC repair system catalyzes the recognition and processing of DNA lesions. A damage recognition complex composed of 2 UvrA and 2 UvrB subunits scans DNA for abnormalities. Upon binding of the UvrA(2)B(2) complex to a putative damaged site, the DNA wraps around one UvrB monomer. DNA wrap is dependent on ATP binding by UvrB and probably causes local melting of the DNA helix, facilitating insertion of UvrB beta-hairpin between the DNA strands. Then UvrB probes one DNA strand for the presence of a lesion. If a lesion is found the UvrA subunits dissociate and the UvrB-DNA preincision complex is formed. This complex is subsequently bound by UvrC and the second UvrB is released. If no lesion is found, the DNA wraps around the other UvrB subunit that will check the other stand for damage. The chain is UvrABC system protein B from Agathobacter rectalis (strain ATCC 33656 / DSM 3377 / JCM 17463 / KCTC 5835 / VPI 0990) (Eubacterium rectale).